A 157-amino-acid chain; its full sequence is Protein Smg (157 aa).

Belongs to the Smg family.

This is Protein Smg from Serratia proteamaculans (strain 568).